The sequence spans 525 residues: G patch domain-containing protein 3 (525 aa).

The segment at 264–316 (YLADIPASPCGEPEEEVGKEEEEESHSDEDDDRGEEWERHEALHEDVTGQERT) is disordered. Acidic residues predominate over residues 275 to 298 (EPEEEVGKEEEEESHSDEDDDRGE). Residues 299–316 (EWERHEALHEDVTGQERT) show a composition bias toward basic and acidic residues. The G-patch domain occupies 410 to 458 (TKGIGRKVMERQGWAEGQGLGCRCSGVPEALDSDGQHPRCKRGLGYHGE).

As to quaternary structure, interacts with mitochondrial MAVS; the interaction is markedly increased upon viral infection. In terms of tissue distribution, expressed in ocular tissues including retinal pigment epithelium, cornea, ciliary muscle and non-pigmented ciliary epithelium. Also expressed in optic nerve, cartilage, skin and lymph node.

It is found in the nucleus. Its subcellular location is the cytoplasm. Functionally, involved in transcriptional regulation. It is able to activate transcription from the CXCR4 promoter and therefore it might control neural crest cell migration involved in ocular and craniofacial development. Is a negative regulator of immune antiviral response, acting via down-regulation of RIG-I-like receptors signaling and inhibition of type I interferon production. The control mechanism involves interaction with mitochondrial MAVS and inhibition of MAVS assembly with downstream proteins implicated in antiviral response, such as TBK1 and TRAF6. In Homo sapiens (Human), this protein is G patch domain-containing protein 3 (GPATCH3).